The chain runs to 219 residues: Probable GTP-binding protein EngB (219 aa).

The region spanning Val31–Pro205 is the EngB-type G domain. GTP contacts are provided by residues Gly39–Ser46, Gly66–Leu70, Asp84–Gly87, Thr151–Asp154, and Phe184–Ser186. The Mg(2+) site is built by Ser46 and Thr68.

This sequence belongs to the TRAFAC class TrmE-Era-EngA-EngB-Septin-like GTPase superfamily. EngB GTPase family. It depends on Mg(2+) as a cofactor.

Necessary for normal cell division and for the maintenance of normal septation. The protein is Probable GTP-binding protein EngB of Shewanella baltica (strain OS223).